A 382-amino-acid polypeptide reads, in one-letter code: MPQRHPQPAHPADGVYFGLMSGTSMDGVDGVAVRFETGRAPVVLAEAFVGFAQSLRDALFALQQPGDDEIDRESVAANALVARYAVCCHELQRTAGLSRDDVRAIGVHGQTVRHRPERGYTRQLNNPALLAELTHVDVIADFRMRDVAAGGHGAPLAPAFHATVFGAPGDTRVVCNLGGISNITILPAEGSDVRGFDCGPANALIDAWATRQLGKPYDDGGKFAARGTVHAALLDALLDEPYFTAPPPKSTGRDLFSAAWLDAKLAGFAQVAPEDVQATLTALTAVSVAREIARHAAGCKAVFVCGGGARNPVLLDALRRALQEAGVLATVDTTAALGVPPQQVEALAFAWLAYRFTARLPGNLASVTGAAGERVLGALYPR.

Gly-22–Asp-29 provides a ligand contact to ATP.

It belongs to the anhydro-N-acetylmuramic acid kinase family.

The catalysed reaction is 1,6-anhydro-N-acetyl-beta-muramate + ATP + H2O = N-acetyl-D-muramate 6-phosphate + ADP + H(+). Its pathway is amino-sugar metabolism; 1,6-anhydro-N-acetylmuramate degradation. The protein operates within cell wall biogenesis; peptidoglycan recycling. Its function is as follows. Catalyzes the specific phosphorylation of 1,6-anhydro-N-acetylmuramic acid (anhMurNAc) with the simultaneous cleavage of the 1,6-anhydro ring, generating MurNAc-6-P. Is required for the utilization of anhMurNAc either imported from the medium or derived from its own cell wall murein, and thus plays a role in cell wall recycling. The polypeptide is Anhydro-N-acetylmuramic acid kinase (Burkholderia vietnamiensis (strain G4 / LMG 22486) (Burkholderia cepacia (strain R1808))).